Consider the following 124-residue polypeptide: NADH-quinone oxidoreductase subunit A (124 aa).

The next 3 membrane-spanning stretches (helical) occupy residues 11 to 31 (YLPI…IMIL), 68 to 88 (LVAI…PWAI), and 93 to 113 (IGKI…IGFV).

Belongs to the complex I subunit 3 family. As to quaternary structure, NDH-1 is composed of 14 different subunits. Subunits NuoA, H, J, K, L, M, N constitute the membrane sector of the complex.

The protein localises to the cell inner membrane. It carries out the reaction a quinone + NADH + 5 H(+)(in) = a quinol + NAD(+) + 4 H(+)(out). In terms of biological role, NDH-1 shuttles electrons from NADH, via FMN and iron-sulfur (Fe-S) centers, to quinones in the respiratory chain. The immediate electron acceptor for the enzyme in this species is believed to be ubiquinone. Couples the redox reaction to proton translocation (for every two electrons transferred, four hydrogen ions are translocated across the cytoplasmic membrane), and thus conserves the redox energy in a proton gradient. This Rickettsia bellii (strain RML369-C) protein is NADH-quinone oxidoreductase subunit A.